Reading from the N-terminus, the 163-residue chain is MSNGPITRTVRQALILDLLEQNQVSSQMQLSELLKQRGVDITQGTLSRDLDELGAKKIRPNGGRAFYAVGTSEDAASSTTAGTREKLRKMLDDLLVSVDHSGNIAVLRTPPAGAPFLASFIDRVGMDEVVGTIAGDDTVFVLARDPMTGKELGEFLSQRRTSL.

This sequence belongs to the ArgR family.

The protein resides in the cytoplasm. It functions in the pathway amino-acid biosynthesis; L-arginine biosynthesis [regulation]. Functionally, regulates arginine biosynthesis genes. The sequence is that of Arginine repressor from Corynebacterium diphtheriae (strain ATCC 700971 / NCTC 13129 / Biotype gravis).